The chain runs to 220 residues: ATP synthase subunit 5, mitochondrial (220 aa).

Belongs to the ATPase delta chain family. In terms of assembly, F-type ATPases have 2 components, CF(1) - the catalytic core - and CF(0) - the membrane proton channel. CF(1) has five subunits: alpha(3), beta(3), gamma(1), delta(1), epsilon(1). CF(0) has three main subunits: a, b and c.

It is found in the mitochondrion. The protein resides in the mitochondrion inner membrane. Functionally, mitochondrial membrane ATP synthase (F(1)F(0) ATP synthase or Complex V) produces ATP from ADP in the presence of a proton gradient across the membrane which is generated by electron transport complexes of the respiratory chain. F-type ATPases consist of two structural domains, F(1) - containing the extramembraneous catalytic core and F(0) - containing the membrane proton channel, linked together by a central stalk and a peripheral stalk. During catalysis, ATP synthesis in the catalytic domain of F(1) is coupled via a rotary mechanism of the central stalk subunits to proton translocation. Part of the complex F(0) domain and the peripheric stalk, which acts as a stator to hold the catalytic alpha(3)beta(3) subcomplex and subunit a/ATP6 static relative to the rotary elements. The chain is ATP synthase subunit 5, mitochondrial (atp-5) from Neurospora crassa (strain ATCC 24698 / 74-OR23-1A / CBS 708.71 / DSM 1257 / FGSC 987).